Reading from the N-terminus, the 282-residue chain is Bis(5'-nucleosyl)-tetraphosphatase, symmetrical (282 aa).

It belongs to the Ap4A hydrolase family.

The enzyme catalyses P(1),P(4)-bis(5'-adenosyl) tetraphosphate + H2O = 2 ADP + 2 H(+). In terms of biological role, hydrolyzes diadenosine 5',5'''-P1,P4-tetraphosphate to yield ADP. This chain is Bis(5'-nucleosyl)-tetraphosphatase, symmetrical, found in Shigella dysenteriae serotype 1 (strain Sd197).